We begin with the raw amino-acid sequence, 891 residues long: uncharacterized protein (891 aa).

The signal sequence occupies residues M1–A20. Transmembrane regions (helical) follow at residues V525–I545, T568–A588, L614–I634, V652–M672, I685–I705, and F776–L796.

Belongs to the TrbL/VirB6 family.

The protein localises to the cell membrane. This is an uncharacterized protein from Rickettsia conorii (strain ATCC VR-613 / Malish 7).